A 336-amino-acid chain; its full sequence is DNA-directed RNA polymerase subunit alpha (336 aa).

The segment at 1 to 232 (MIQKNWQELI…DQLSVFVNFD (232 aa)) is alpha N-terminal domain (alpha-NTD). Residues 248–336 (FNPALLKKVD…DLAKRYEDQY (89 aa)) are alpha C-terminal domain (alpha-CTD).

Belongs to the RNA polymerase alpha chain family. In terms of assembly, homodimer. The RNAP catalytic core consists of 2 alpha, 1 beta, 1 beta' and 1 omega subunit. When a sigma factor is associated with the core the holoenzyme is formed, which can initiate transcription.

It catalyses the reaction RNA(n) + a ribonucleoside 5'-triphosphate = RNA(n+1) + diphosphate. Functionally, DNA-dependent RNA polymerase catalyzes the transcription of DNA into RNA using the four ribonucleoside triphosphates as substrates. This chain is DNA-directed RNA polymerase subunit alpha, found in Sinorhizobium medicae (strain WSM419) (Ensifer medicae).